Consider the following 260-residue polypeptide: Flap endonuclease Xni (260 aa).

Mg(2+) is bound at residue aspartate 104. The 5'-3' exonuclease domain occupies 160 to 250 (VSPQQLTDYW…NGNLQQLRLP (91 aa)). K(+) contacts are provided by leucine 171, alanine 172, proline 180, valine 182, and isoleucine 185. An interaction with DNA region spans residues 184–189 (GIGPKS).

Belongs to the Xni family. Requires Mg(2+) as cofactor. It depends on K(+) as a cofactor.

Functionally, has flap endonuclease activity. During DNA replication, flap endonucleases cleave the 5'-overhanging flap structure that is generated by displacement synthesis when DNA polymerase encounters the 5'-end of a downstream Okazaki fragment. The protein is Flap endonuclease Xni of Pectobacterium atrosepticum (strain SCRI 1043 / ATCC BAA-672) (Erwinia carotovora subsp. atroseptica).